The primary structure comprises 340 residues: Ketol-acid reductoisomerase (NADP(+)) (340 aa).

The region spanning 3–182 is the KARI N-terminal Rossmann domain; it reads VQMEYEKDVK…GAARVGLLET (180 aa). Residues 26–29, arginine 49, serine 53, and 83–86 contribute to the NADP(+) site; these read YGSQ and DEIQ. The active site involves histidine 108. Residue glycine 134 coordinates NADP(+). A KARI C-terminal knotted domain is found at 183–328; it reads TYKEETEEDL…AELRKAMPFV (146 aa). 4 residues coordinate Mg(2+): aspartate 191, glutamate 195, glutamate 227, and glutamate 231. Serine 252 lines the substrate pocket.

It belongs to the ketol-acid reductoisomerase family. Mg(2+) is required as a cofactor.

It carries out the reaction (2R)-2,3-dihydroxy-3-methylbutanoate + NADP(+) = (2S)-2-acetolactate + NADPH + H(+). It catalyses the reaction (2R,3R)-2,3-dihydroxy-3-methylpentanoate + NADP(+) = (S)-2-ethyl-2-hydroxy-3-oxobutanoate + NADPH + H(+). It participates in amino-acid biosynthesis; L-isoleucine biosynthesis; L-isoleucine from 2-oxobutanoate: step 2/4. Its pathway is amino-acid biosynthesis; L-valine biosynthesis; L-valine from pyruvate: step 2/4. Involved in the biosynthesis of branched-chain amino acids (BCAA). Catalyzes an alkyl-migration followed by a ketol-acid reduction of (S)-2-acetolactate (S2AL) to yield (R)-2,3-dihydroxy-isovalerate. In the isomerase reaction, S2AL is rearranged via a Mg-dependent methyl migration to produce 3-hydroxy-3-methyl-2-ketobutyrate (HMKB). In the reductase reaction, this 2-ketoacid undergoes a metal-dependent reduction by NADPH to yield (R)-2,3-dihydroxy-isovalerate. The polypeptide is Ketol-acid reductoisomerase (NADP(+)) (Streptococcus pneumoniae (strain JJA)).